The sequence spans 146 residues: Large-conductance mechanosensitive channel (146 aa).

Transmembrane regions (helical) follow at residues 17–37 (IDLAVGVIIGGAFGKIVDSLV), 40–60 (IIMPLITVITGGGVDFTQKFV), and 89–109 (LTILINFIILAWVVFLMVKLI).

This sequence belongs to the MscL family. As to quaternary structure, homopentamer.

It localises to the cell inner membrane. Channel that opens in response to stretch forces in the membrane lipid bilayer. May participate in the regulation of osmotic pressure changes within the cell. The polypeptide is Large-conductance mechanosensitive channel (Acinetobacter baylyi (strain ATCC 33305 / BD413 / ADP1)).